The following is a 152-amino-acid chain: Small ribosomal subunit protein bS6 (152 aa).

Positions 96–152 (HEEGPSAMLQKRDRDDRGERGDRGDRGDRGDRGFGGREDRPRRPRPTEESHGGEEEV) are disordered.

Belongs to the bacterial ribosomal protein bS6 family.

Functionally, binds together with bS18 to 16S ribosomal RNA. The sequence is that of Small ribosomal subunit protein bS6 from Xanthobacter autotrophicus (strain ATCC BAA-1158 / Py2).